The primary structure comprises 82 residues: MTRILLLLLGFYQYFISPLLGNNCRFHPTCSEYAKEAISMHGSIKGLWFTFKRIIKCQPFCNGGYDTVPISIKNSKPLNKKI.

This sequence belongs to the UPF0161 family.

The protein localises to the cell inner membrane. Could be involved in insertion of integral membrane proteins into the membrane. The sequence is that of Putative membrane protein insertion efficiency factor from Rickettsia africae (strain ESF-5).